We begin with the raw amino-acid sequence, 175 residues long: ATP synthase subunit b 2 (175 aa).

A helical transmembrane segment spans residues 20 to 40 (LIFWTAVTFVIVLLILKKFAW).

This sequence belongs to the ATPase B chain family. F-type ATPases have 2 components, F(1) - the catalytic core - and F(0) - the membrane proton channel. F(1) has five subunits: alpha(3), beta(3), gamma(1), delta(1), epsilon(1). F(0) has four main subunits: a(1), b(2) and c(10-14). The alpha and beta chains form an alternating ring which encloses part of the gamma chain. F(1) is attached to F(0) by a central stalk formed by the gamma and epsilon chains, while a peripheral stalk is formed by the delta and b chains.

It is found in the cell inner membrane. Its function is as follows. F(1)F(0) ATP synthase produces ATP from ADP in the presence of a proton or sodium gradient. F-type ATPases consist of two structural domains, F(1) containing the extramembraneous catalytic core and F(0) containing the membrane proton channel, linked together by a central stalk and a peripheral stalk. During catalysis, ATP synthesis in the catalytic domain of F(1) is coupled via a rotary mechanism of the central stalk subunits to proton translocation. Functionally, component of the F(0) channel, it forms part of the peripheral stalk, linking F(1) to F(0). The chain is ATP synthase subunit b 2 from Prosthecochloris aestuarii (strain DSM 271 / SK 413).